A 131-amino-acid chain; its full sequence is Leptin receptor overlapping transcript-like 1 (131 aa).

The next 4 membrane-spanning stretches (helical) occupy residues 7-27 (LISL…GCAL), 32-52 (QYWP…YCIA), 69-89 (LAIF…IVFA), and 100-120 (ALVL…FLVF).

Belongs to the OB-RGRP/VPS55 family.

Its subcellular location is the membrane. Functionally, negatively regulates growth hormone (GH) receptor cell surface expression in liver. May play a role in liver resistance to GH during periods of reduced nutrient availability. This is Leptin receptor overlapping transcript-like 1 (LEPROTL1) from Bos taurus (Bovine).